The chain runs to 416 residues: MNYALETNDKEIFDLIHEELDRQNTHLEMIASENFTFPAVMEAMGSVLTNKYAEGYPYKRYYGGCEFVDRVEEIAIERAKKLFGCGFANVQPHAGSQANVAVYNALLKPYDKILGMDLSHGGHLTHGAKVSVTGQTYQSFFYGVELDGYINYDKVEEIAKIVKPQMIVCGFSAYARELDFKRFREIADSVGALLLGDVAHVAGLIVAGEYPNPFPHCHIVTTTTHKTLRGPRGGMILTNDEEIAKKIDKAVFPGMQGGPLMHVIAAKAVGFGENLKPEWKEYAKQVKANAKVLAKVLMARGYTLVSGGTDNHLILVSLLDKEFSGKDADRALGEAGITVNKNTVPGETRSPFVTSGVRIGSAALTARGMREKEFEFIATKIADVLDDVNNAAKHAEIKKEIAEFAKGFPVYTKAIF.

(6S)-5,6,7,8-tetrahydrofolate-binding positions include leucine 118 and 122–124 (GHL). The residue at position 226 (lysine 226) is an N6-(pyridoxal phosphate)lysine. (6S)-5,6,7,8-tetrahydrofolate is bound by residues glutamate 242 and 350–352 (SPF).

It belongs to the SHMT family. As to quaternary structure, homodimer. Pyridoxal 5'-phosphate serves as cofactor.

It is found in the cytoplasm. It catalyses the reaction (6R)-5,10-methylene-5,6,7,8-tetrahydrofolate + glycine + H2O = (6S)-5,6,7,8-tetrahydrofolate + L-serine. It functions in the pathway one-carbon metabolism; tetrahydrofolate interconversion. It participates in amino-acid biosynthesis; glycine biosynthesis; glycine from L-serine: step 1/1. Functionally, catalyzes the reversible interconversion of serine and glycine with tetrahydrofolate (THF) serving as the one-carbon carrier. This reaction serves as the major source of one-carbon groups required for the biosynthesis of purines, thymidylate, methionine, and other important biomolecules. Also exhibits THF-independent aldolase activity toward beta-hydroxyamino acids, producing glycine and aldehydes, via a retro-aldol mechanism. The polypeptide is Serine hydroxymethyltransferase (Wolinella succinogenes (strain ATCC 29543 / DSM 1740 / CCUG 13145 / JCM 31913 / LMG 7466 / NCTC 11488 / FDC 602W) (Vibrio succinogenes)).